Here is a 524-residue protein sequence, read N- to C-terminus: Vang-like protein 1 (524 aa).

Low complexity predominate over residues Met1–Ser15. The interval Met1–His85 is disordered. At Met1–Ser117 the chain is on the cytoplasmic side. The segment covering Gly73–His85 has biased composition (polar residues). A phosphoserine mark is found at Ser86 and Ser88. Residues Phe118–Trp138 form a helical membrane-spanning segment. Over Arg139 to Gly151 the chain is Extracellular. The chain crosses the membrane as a helical span at residues Leu152–Phe172. Residues Arg173–Val182 lie on the Cytoplasmic side of the membrane. Residues Phe183–Phe203 form a helical membrane-spanning segment. The Extracellular portion of the chain corresponds to Tyr204–Tyr222. A helical membrane pass occupies residues Ala223 to Leu243. The Cytoplasmic portion of the chain corresponds to Arg244–Val524.

This sequence belongs to the Vang family. Heterodimer with VANGL2. Interacts through its C-terminal region with the N-terminal half of DVL1, DVL2 and DVL3. The PDZ domain of DVL1, DVL2 and DVL3 is required for the interaction. In terms of tissue distribution, according to PubMed:11956595, ubiquitously expressed. According to PubMed:12011995, expressed specifically in testis and ovary.

The protein resides in the cell membrane. This chain is Vang-like protein 1 (VANGL1), found in Homo sapiens (Human).